The primary structure comprises 230 residues: uncharacterized protein (230 aa).

Belongs to the transferase hexapeptide repeat family.

This is an uncharacterized protein from Escherichia coli (strain K12).